A 484-amino-acid chain; its full sequence is Zinc metalloproteinase-disintegrin jerdonitin (484 aa).

Residues 1–20 (MIQVLLVTICLAVFPYQGSS) form the signal peptide. The propeptide occupies 21 to 191 (IILESGNIDD…KLSQIMIPPE (171 aa)). Q192 carries the pyrrolidone carboxylic acid modification. Residues 194-392 (RYIELVIVAD…FTSRCLYNEP (199 aa)) form the Peptidase M12B domain. Ca(2+) contacts are provided by E197 and D281. Intrachain disulfides connect C305–C387, C345–C369, and C347–C352. H330 lines the Zn(2+) pocket. E331 is an active-site residue. Zn(2+)-binding residues include H334 and H340. Ca(2+)-binding residues include C387, N390, V402, N405, E409, E412, and D415. The Disintegrin domain maps to 400–484 (PSVCGNYYME…AGCPRNPFHA (85 aa)). Cystine bridges form between C403-C422, C414-C432, C416-C427, C426-C449, C440-C446, C445-C470, and C458-C477. The short motif at 462–464 (RGD) is the Cell attachment site element.

It belongs to the venom metalloproteinase (M12B) family. P-II subfamily. P-IIb sub-subfamily. As to quaternary structure, monomer. Zn(2+) serves as cofactor. The N-terminus is blocked. Expressed by the venom gland.

The protein localises to the secreted. Fibrinogenolytic activity is completely inhibited by EDTA, but not by PMSF. Snake venom zinc metalloproteinase that inhibits ADP-induced human platelet aggregation (IC(50)=120 nM (native) and IC(50)=248 nM (recombinant)). May act by binding to the receptor GPIIb/GPIIIa (ITGA2B/ITGB3) on the platelet surface. Degrades the alpha-chain of fibrinogen completely and the beta-chain partially, leaving the gamma chain intact. Also inhibits the growth of several cell lines, including human liver cancer cells (Bel7402), human leukemia cells (K562) and human gastric carcinoma cells (BGC823). The chain is Zinc metalloproteinase-disintegrin jerdonitin from Protobothrops jerdonii (Jerdon's pitviper).